The chain runs to 183 residues: MELAQIVERLKKNEVVAYPTEAVFGLGCNPNSKSAVEKLLILKQRPVEKGLILVAHKLDLLLPFIDESRLKQSHWQLLTQQYDCPTTWVVPAKLSVPKFITGQFDSVAVRLCTHPAVAQLCEQTGFALTSTSANLSGLPPCKTAQQVRSQFGEFFPVLDMAVGNAVNPSEIRDIFSRQIFRRG.

The YrdC-like domain maps to 1–183 (MELAQIVERL…IFSRQIFRRG (183 aa)).

It belongs to the SUA5 family. TsaC subfamily.

It is found in the cytoplasm. The catalysed reaction is L-threonine + hydrogencarbonate + ATP = L-threonylcarbamoyladenylate + diphosphate + H2O. Functionally, required for the formation of a threonylcarbamoyl group on adenosine at position 37 (t(6)A37) in tRNAs that read codons beginning with adenine. Catalyzes the conversion of L-threonine, HCO(3)(-)/CO(2) and ATP to give threonylcarbamoyl-AMP (TC-AMP) as the acyladenylate intermediate, with the release of diphosphate. The protein is Threonylcarbamoyl-AMP synthase of Mannheimia succiniciproducens (strain KCTC 0769BP / MBEL55E).